We begin with the raw amino-acid sequence, 67 residues long: MLYPSVDKLQKTVPSKYTIVTVAAKRARQIQDGKRVKVANPKSYKPVGKALEELFSGEVVVTNQPQD.

The protein belongs to the RNA polymerase subunit omega family. The RNAP catalytic core consists of 2 alpha, 1 beta, 1 beta' and 1 omega subunit. When a sigma factor is associated with the core the holoenzyme is formed, which can initiate transcription.

The catalysed reaction is RNA(n) + a ribonucleoside 5'-triphosphate = RNA(n+1) + diphosphate. In terms of biological role, promotes RNA polymerase assembly. Latches the N- and C-terminal regions of the beta' subunit thereby facilitating its interaction with the beta and alpha subunits. In Exiguobacterium sibiricum (strain DSM 17290 / CCUG 55495 / CIP 109462 / JCM 13490 / 255-15), this protein is DNA-directed RNA polymerase subunit omega.